Here is a 181-residue protein sequence, read N- to C-terminus: Adenine phosphoribosyltransferase (181 aa).

The protein belongs to the purine/pyrimidine phosphoribosyltransferase family. In terms of assembly, homodimer.

The protein resides in the cytoplasm. It catalyses the reaction AMP + diphosphate = 5-phospho-alpha-D-ribose 1-diphosphate + adenine. It participates in purine metabolism; AMP biosynthesis via salvage pathway; AMP from adenine: step 1/1. In terms of biological role, catalyzes a salvage reaction resulting in the formation of AMP, that is energically less costly than de novo synthesis. This Aeromonas salmonicida (strain A449) protein is Adenine phosphoribosyltransferase.